Reading from the N-terminus, the 874-residue chain is Oxidation resistance protein 1 (874 aa).

Residues 1 to 89 (MTKDKNSPGL…KTLDKKDGRR (89 aa)) form a disordered region. Positions 64 to 89 (RRSELKRFYTIDTGQKKTLDKKDGRR) are enriched in basic and acidic residues. S91 is modified (phosphoserine). Residues 99–142 (IEYTVESRDSLNSIALKFDTTPNELVQLNKLFSRAVVTGQVLYV) enclose the LysM domain. T119 carries the phosphothreonine modification. A compositionally biased stretch (low complexity) spans 151-169 (VESSPSLSPVSPLSPTSSE). Residues 151 to 194 (VESSPSLSPVSPLSPTSSEAEFDKTTNPDVHPTEATPSSTFTGI) form a disordered region. 3 positions are modified to phosphoserine: S201, S202, and S204. In terms of domain architecture, GRAM spans 208 to 275 (EAFTEKFLKI…EEVMSAAMYK (68 aa)). 3 positions are modified to phosphoserine: S294, S334, and S336. 2 disordered regions span residues 299–406 (CHSK…TNEV) and 431–537 (FQGI…ITSA). T341 is modified (phosphothreonine). Position 346 is a phosphoserine (S346). Positions 347–362 (PIREELVSSDELRQDK) are enriched in basic and acidic residues. Residues 363–391 (SSGASSESVQTVNQAEVESLTVKSESTGT) show a composition bias toward polar residues. The span at 452–466 (SFLHENSLHQEESQK) shows a compositional bias: basic and acidic residues. Position 496 is a phosphoserine (S496). The segment covering 510 to 527 (HTMQQTKQQRENIQQVSQ) has biased composition (polar residues). The interval 551 to 578 (QRHRLHKFLCLRVGKPMRKTFVSQASAT) is mediates oxidative antimutator activity. Residues 713 to 874 (ELLLPDQIEK…IQDIEIWAFE (162 aa)) form the TLDc domain.

It belongs to the OXR1 family.

Its subcellular location is the mitochondrion. In terms of biological role, may be involved in protection from oxidative damage. The chain is Oxidation resistance protein 1 (OXR1) from Homo sapiens (Human).